The primary structure comprises 64 residues: Small, acid-soluble spore protein H (64 aa).

It belongs to the SspH family.

It localises to the spore core. The protein is Small, acid-soluble spore protein H of Acetivibrio thermocellus (strain ATCC 27405 / DSM 1237 / JCM 9322 / NBRC 103400 / NCIMB 10682 / NRRL B-4536 / VPI 7372) (Clostridium thermocellum).